A 156-amino-acid chain; its full sequence is ATP synthase subunit b (156 aa).

A helical transmembrane segment spans residues 7-27; sequence IFFQMLVFFVLGWFTMKFVWP.

It belongs to the ATPase B chain family. F-type ATPases have 2 components, F(1) - the catalytic core - and F(0) - the membrane proton channel. F(1) has five subunits: alpha(3), beta(3), gamma(1), delta(1), epsilon(1). F(0) has three main subunits: a(1), b(2) and c(10-14). The alpha and beta chains form an alternating ring which encloses part of the gamma chain. F(1) is attached to F(0) by a central stalk formed by the gamma and epsilon chains, while a peripheral stalk is formed by the delta and b chains.

It localises to the cell inner membrane. Functionally, f(1)F(0) ATP synthase produces ATP from ADP in the presence of a proton or sodium gradient. F-type ATPases consist of two structural domains, F(1) containing the extramembraneous catalytic core and F(0) containing the membrane proton channel, linked together by a central stalk and a peripheral stalk. During catalysis, ATP synthesis in the catalytic domain of F(1) is coupled via a rotary mechanism of the central stalk subunits to proton translocation. In terms of biological role, component of the F(0) channel, it forms part of the peripheral stalk, linking F(1) to F(0). The protein is ATP synthase subunit b of Bordetella bronchiseptica (strain ATCC BAA-588 / NCTC 13252 / RB50) (Alcaligenes bronchisepticus).